Here is a 120-residue protein sequence, read N- to C-terminus: UPF0102 protein NT01CX_2205 (120 aa).

This sequence belongs to the UPF0102 family.

The sequence is that of UPF0102 protein NT01CX_2205 from Clostridium novyi (strain NT).